We begin with the raw amino-acid sequence, 366 residues long: MAQQTPLYEEHHASGAKMVDFHGWMMPLHYGSQLDEHHQVRRDVGMFDVSHMTIVDLAGPRTRDFLRHLLANDVAKLTVPGKALYTGMLNASGGVIDDLIVYFLSEIEFRLVVNSETRDKDVEWITRHAEPYQVTVTVRDDLALIAVQGPQAQSKTQTLFSSQQRQAVSGMKPFFGVQANELFIATTGYTGEAGYEIALPATQAADFWRQLLAAGVKPCGLGARDTLRLEAGMNLYGQEMDEGISPLAANMGWTITWRPEGRDFIGREALEAQRAAGDGEQLVGLVMTEKGVLRNGLPVHFTDAAGNMQQGIITSGSFSPTLGVSIALARVPAGIGQQAIVLIRNREMPVKVTKPGFVRAGKAVAQ.

The protein belongs to the GcvT family. As to quaternary structure, the glycine cleavage system is composed of four proteins: P, T, L and H.

The enzyme catalyses N(6)-[(R)-S(8)-aminomethyldihydrolipoyl]-L-lysyl-[protein] + (6S)-5,6,7,8-tetrahydrofolate = N(6)-[(R)-dihydrolipoyl]-L-lysyl-[protein] + (6R)-5,10-methylene-5,6,7,8-tetrahydrofolate + NH4(+). In terms of biological role, the glycine cleavage system catalyzes the degradation of glycine. The chain is Aminomethyltransferase from Sodalis glossinidius (strain morsitans).